A 351-amino-acid chain; its full sequence is Histidinol-phosphate aminotransferase 1 (351 aa).

Position 210 is an N6-(pyridoxal phosphate)lysine (Lys-210).

This sequence belongs to the class-II pyridoxal-phosphate-dependent aminotransferase family. Histidinol-phosphate aminotransferase subfamily. Homodimer. The cofactor is pyridoxal 5'-phosphate.

The enzyme catalyses L-histidinol phosphate + 2-oxoglutarate = 3-(imidazol-4-yl)-2-oxopropyl phosphate + L-glutamate. Its pathway is amino-acid biosynthesis; L-histidine biosynthesis; L-histidine from 5-phospho-alpha-D-ribose 1-diphosphate: step 7/9. This chain is Histidinol-phosphate aminotransferase 1 (hisC1), found in Pseudomonas aeruginosa (strain ATCC 15692 / DSM 22644 / CIP 104116 / JCM 14847 / LMG 12228 / 1C / PRS 101 / PAO1).